A 206-amino-acid polypeptide reads, in one-letter code: Recombination protein RecR (206 aa).

Residues 58 to 73 (CENCHNISDVAVCEIC) form a C4-type zinc finger. The region spanning 81–176 (QIVCVVEDVR…ITSSIARGIS (96 aa)) is the Toprim domain.

Belongs to the RecR family.

Its function is as follows. May play a role in DNA repair. It seems to be involved in an RecBC-independent recombinational process of DNA repair. It may act with RecF and RecO. In Flavobacterium psychrophilum (strain ATCC 49511 / DSM 21280 / CIP 103535 / JIP02/86), this protein is Recombination protein RecR.